We begin with the raw amino-acid sequence, 96 residues long: UPF0213 protein BCE33L0031 (96 aa).

Residues 4–79 (NKHCFYVVEC…KQLNRKQKEE (76 aa)) form the GIY-YIG domain.

This sequence belongs to the UPF0213 family.

The protein is UPF0213 protein BCE33L0031 of Bacillus cereus (strain ZK / E33L).